The primary structure comprises 302 residues: uncharacterized protein (302 aa).

Disordered stretches follow at residues 1 to 167 and 180 to 199; these read MPCR…QSSE and PSLC…QRAS. The span at 39-54 shows a compositional bias: basic and acidic residues; that stretch reads EESHAPSRDPRDHQGS. Composition is skewed to polar residues over residues 123–133 and 183–197; these read LSTSSCASVSR and CPSQ…SPQR.

This is an uncharacterized protein from Homo sapiens (Human).